We begin with the raw amino-acid sequence, 91 residues long: Small ribosomal subunit protein bS20 (91 aa).

Residues M1–N18 are compositionally biased toward basic and acidic residues. The tract at residues M1–K26 is disordered.

The protein belongs to the bacterial ribosomal protein bS20 family.

Binds directly to 16S ribosomal RNA. The polypeptide is Small ribosomal subunit protein bS20 (Pelodictyon phaeoclathratiforme (strain DSM 5477 / BU-1)).